Consider the following 228-residue polypeptide: 5'-methylthioadenosine/S-adenosylhomocysteine nucleosidase (228 aa).

The active-site Proton acceptor is the E11. Substrate is bound by residues G77, I151, and 172 to 173 (ME). The Proton donor role is filled by D196.

The protein belongs to the PNP/UDP phosphorylase family. MtnN subfamily.

It carries out the reaction S-adenosyl-L-homocysteine + H2O = S-(5-deoxy-D-ribos-5-yl)-L-homocysteine + adenine. It catalyses the reaction S-methyl-5'-thioadenosine + H2O = 5-(methylsulfanyl)-D-ribose + adenine. The enzyme catalyses 5'-deoxyadenosine + H2O = 5-deoxy-D-ribose + adenine. The protein operates within amino-acid biosynthesis; L-methionine biosynthesis via salvage pathway; S-methyl-5-thio-alpha-D-ribose 1-phosphate from S-methyl-5'-thioadenosine (hydrolase route): step 1/2. In terms of biological role, catalyzes the irreversible cleavage of the glycosidic bond in both 5'-methylthioadenosine (MTA) and S-adenosylhomocysteine (SAH/AdoHcy) to adenine and the corresponding thioribose, 5'-methylthioribose and S-ribosylhomocysteine, respectively. Also cleaves 5'-deoxyadenosine, a toxic by-product of radical S-adenosylmethionine (SAM) enzymes, into 5-deoxyribose and adenine. The polypeptide is 5'-methylthioadenosine/S-adenosylhomocysteine nucleosidase (Staphylococcus aureus (strain MRSA252)).